The following is a 345-amino-acid chain: DNA-directed RNA polymerase subunit alpha (345 aa).

The alpha N-terminal domain (alpha-NTD) stretch occupies residues 1 to 233 (MVRNWCSLIR…KQLQVFVGLH (233 aa)). Residues 256–345 (LNDILLRHVE…EEMGEIQEEG (90 aa)) are alpha C-terminal domain (alpha-CTD).

Belongs to the RNA polymerase alpha chain family. In terms of assembly, homodimer. The RNAP catalytic core consists of 2 alpha, 1 beta, 1 beta' and 1 omega subunit. When a sigma factor is associated with the core the holoenzyme is formed, which can initiate transcription.

The enzyme catalyses RNA(n) + a ribonucleoside 5'-triphosphate = RNA(n+1) + diphosphate. In terms of biological role, DNA-dependent RNA polymerase catalyzes the transcription of DNA into RNA using the four ribonucleoside triphosphates as substrates. This Syntrophus aciditrophicus (strain SB) protein is DNA-directed RNA polymerase subunit alpha.